A 206-amino-acid polypeptide reads, in one-letter code: Ribosomal RNA large subunit methyltransferase E (206 aa).

Positions 60, 62, 80, 96, and 121 each coordinate S-adenosyl-L-methionine. Lys161 functions as the Proton acceptor in the catalytic mechanism.

Belongs to the class I-like SAM-binding methyltransferase superfamily. RNA methyltransferase RlmE family.

The protein resides in the cytoplasm. The enzyme catalyses uridine(2552) in 23S rRNA + S-adenosyl-L-methionine = 2'-O-methyluridine(2552) in 23S rRNA + S-adenosyl-L-homocysteine + H(+). In terms of biological role, specifically methylates the uridine in position 2552 of 23S rRNA at the 2'-O position of the ribose in the fully assembled 50S ribosomal subunit. This is Ribosomal RNA large subunit methyltransferase E from Nitrosospira multiformis (strain ATCC 25196 / NCIMB 11849 / C 71).